Here is a 551-residue protein sequence, read N- to C-terminus: HTH-type transcriptional regulator SgrR (551 aa).

One can recognise an HTH marR-type domain in the interval 1-116 (MPSARLQQQF…LVSHLGRSFR (116 aa)). Residues 26–49 (LNELAALLSCSRRHMRTLLNTMQD) constitute a DNA-binding region (H-T-H motif). Residues 163-492 (ELEADIAHHW…IDWQADAARW (330 aa)) form a solute-binding region.

Functionally, activates the small RNA gene sgrS under glucose-phosphate stress conditions as well as yfdZ. Represses its own transcription under both stress and non-stress conditions. Might act as a sensor of the intracellular accumulation of phosphoglucose by binding these molecules in its C-terminal solute-binding domain. The polypeptide is HTH-type transcriptional regulator SgrR (Shigella sonnei (strain Ss046)).